Here is a 689-residue protein sequence, read N- to C-terminus: Glycine--tRNA ligase beta subunit (689 aa).

It belongs to the class-II aminoacyl-tRNA synthetase family. Tetramer of two alpha and two beta subunits.

Its subcellular location is the cytoplasm. It catalyses the reaction tRNA(Gly) + glycine + ATP = glycyl-tRNA(Gly) + AMP + diphosphate. In Shewanella pealeana (strain ATCC 700345 / ANG-SQ1), this protein is Glycine--tRNA ligase beta subunit.